Reading from the N-terminus, the 55-residue chain is Large ribosomal subunit protein bL33B (55 aa).

The protein belongs to the bacterial ribosomal protein bL33 family.

The sequence is that of Large ribosomal subunit protein bL33B (rpmG2) from Mycobacterium tuberculosis (strain CDC 1551 / Oshkosh).